We begin with the raw amino-acid sequence, 444 residues long: Glutamyl-tRNA reductase (444 aa).

Residues 41-44 (TCNR), S102, 107-109 (ERE), and Q113 contribute to the substrate site. The Nucleophile role is filled by C42. Residue 181-186 (GTGSYA) participates in NADP(+) binding.

Belongs to the glutamyl-tRNA reductase family. In terms of assembly, homodimer.

The enzyme catalyses (S)-4-amino-5-oxopentanoate + tRNA(Glu) + NADP(+) = L-glutamyl-tRNA(Glu) + NADPH + H(+). It participates in porphyrin-containing compound metabolism; protoporphyrin-IX biosynthesis; 5-aminolevulinate from L-glutamyl-tRNA(Glu): step 1/2. In terms of biological role, catalyzes the NADPH-dependent reduction of glutamyl-tRNA(Glu) to glutamate 1-semialdehyde (GSA). The polypeptide is Glutamyl-tRNA reductase (Cutibacterium acnes (strain DSM 16379 / KPA171202) (Propionibacterium acnes)).